The primary structure comprises 252 residues: Hydroxyacylglutathione hydrolase (252 aa).

Histidine 54, histidine 56, aspartate 58, histidine 59, histidine 111, aspartate 130, and histidine 170 together coordinate Zn(2+).

The protein belongs to the metallo-beta-lactamase superfamily. Glyoxalase II family. In terms of assembly, monomer. It depends on Zn(2+) as a cofactor.

It catalyses the reaction an S-(2-hydroxyacyl)glutathione + H2O = a 2-hydroxy carboxylate + glutathione + H(+). Its pathway is secondary metabolite metabolism; methylglyoxal degradation; (R)-lactate from methylglyoxal: step 2/2. Thiolesterase that catalyzes the hydrolysis of S-D-lactoyl-glutathione to form glutathione and D-lactic acid. The polypeptide is Hydroxyacylglutathione hydrolase (Francisella tularensis subsp. novicida (strain U112)).